We begin with the raw amino-acid sequence, 29 residues long: KKIDTRTGKTMEKTEKKIELSLKNMKTAT.

It localises to the secreted. Has antibacterial activity against strains of L.monocytogenes, L.lactis, B.subtilis, S.typhi, S.aureus, C.perfringens, E.aerogenes and M.luteus but not against E.coli, S.sonnei, S.pneumoniae, S.faecalis, P.aeruginosa, K.pneumoniae or P.vulgaris. This is Bacteriocin from Lactococcus lactis subsp. lactis (Streptococcus lactis).